Here is a 171-residue protein sequence, read N- to C-terminus: Large ribosomal subunit protein uL15 (171 aa).

Residues 1–10 (MKLNEISDNN) are compositionally biased toward polar residues. 2 disordered regions span residues 1–44 (MKLN…RSGV) and 150–171 (LPEA…NKAK). Over residues 21-35 (RGIGSGKGKTAGRGQ) the composition is skewed to gly residues. A compositionally biased stretch (basic and acidic residues) spans 157 to 171 (EQEKKAARREANKAK).

This sequence belongs to the universal ribosomal protein uL15 family. As to quaternary structure, part of the 50S ribosomal subunit.

Functionally, binds to the 23S rRNA. The chain is Large ribosomal subunit protein uL15 from Novosphingobium aromaticivorans (strain ATCC 700278 / DSM 12444 / CCUG 56034 / CIP 105152 / NBRC 16084 / F199).